A 379-amino-acid polypeptide reads, in one-letter code: Acetylornithine aminotransferase (379 aa).

Pyridoxal 5'-phosphate contacts are provided by residues 93–94 (GA) and Phe120. Residue Arg123 participates in N(2)-acetyl-L-ornithine binding. Pyridoxal 5'-phosphate is bound at residue 205-208 (DEVQ). Lys234 bears the N6-(pyridoxal phosphate)lysine mark. Ser262 is a binding site for N(2)-acetyl-L-ornithine. Thr263 is a pyridoxal 5'-phosphate binding site.

This sequence belongs to the class-III pyridoxal-phosphate-dependent aminotransferase family. ArgD subfamily. Homodimer. Pyridoxal 5'-phosphate serves as cofactor.

The protein resides in the cytoplasm. It carries out the reaction N(2)-acetyl-L-ornithine + 2-oxoglutarate = N-acetyl-L-glutamate 5-semialdehyde + L-glutamate. It participates in amino-acid biosynthesis; L-arginine biosynthesis; N(2)-acetyl-L-ornithine from L-glutamate: step 4/4. The sequence is that of Acetylornithine aminotransferase from Streptococcus mutans serotype c (strain ATCC 700610 / UA159).